The sequence spans 290 residues: Acetylglutamate kinase (290 aa).

Substrate-binding positions include 72-73 (GG), Arg-94, and Asn-187.

It belongs to the acetylglutamate kinase family. ArgB subfamily.

It localises to the plastid. It is found in the chloroplast. The catalysed reaction is N-acetyl-L-glutamate + ATP = N-acetyl-L-glutamyl 5-phosphate + ADP. It participates in amino-acid biosynthesis; L-arginine biosynthesis; N(2)-acetyl-L-ornithine from L-glutamate: step 2/4. Functionally, catalyzes the ATP-dependent phosphorylation of N-acetyl-L-glutamate. In Cyanidioschyzon merolae (strain NIES-3377 / 10D) (Unicellular red alga), this protein is Acetylglutamate kinase.